A 501-amino-acid chain; its full sequence is Ribose import ATP-binding protein RbsA (501 aa).

ABC transporter domains lie at 5 to 241 (LQLK…VGRK) and 252 to 495 (APGE…VGKL). 37–44 (GENGAGKS) provides a ligand contact to ATP.

It belongs to the ABC transporter superfamily. Ribose importer (TC 3.A.1.2.1) family. The complex is composed of an ATP-binding protein (RbsA), two transmembrane proteins (RbsC) and a solute-binding protein (RbsB).

Its subcellular location is the cell inner membrane. The catalysed reaction is D-ribose(out) + ATP + H2O = D-ribose(in) + ADP + phosphate + H(+). Part of the ABC transporter complex RbsABC involved in ribose import. Responsible for energy coupling to the transport system. This Salmonella paratyphi A (strain ATCC 9150 / SARB42) protein is Ribose import ATP-binding protein RbsA.